A 202-amino-acid chain; its full sequence is Small ribosomal subunit protein uS4c (202 aa).

The S4 RNA-binding domain occupies 90–151; sequence MRLDNTIFRL…KQKSRFIITK (62 aa).

The protein belongs to the universal ribosomal protein uS4 family. As to quaternary structure, part of the 30S ribosomal subunit. Contacts protein S5. The interaction surface between S4 and S5 is involved in control of translational fidelity.

It is found in the plastid. Its subcellular location is the chloroplast. In terms of biological role, one of the primary rRNA binding proteins, it binds directly to 16S rRNA where it nucleates assembly of the body of the 30S subunit. With S5 and S12 plays an important role in translational accuracy. The polypeptide is Small ribosomal subunit protein uS4c (rps4) (Plagiochila adianthoides (Liverwort)).